The chain runs to 126 residues: 13 kDa ribonucleoprotein-associated protein (126 aa).

This sequence belongs to the eukaryotic ribosomal protein eL8 family. Component of the U3 snoRNP particle. Binds to the C'/D and B/C motifs in U3 snoRNA. Component of the 25S U4/U6.U5 tri-snRNP particle, a subcomplex of the spliceosome. Binds to the 5' stem-loop of U4 snRNA.

The protein resides in the nucleus. It is found in the nucleolus. Functionally, common component of the spliceosome and rRNA processing machinery. In association with the spliceosomal U4/U6.U5 tri-snRNP particle, required for splicing of pre-mRNA. In association with box C/D snoRNPs, required for processing of pre-ribosomal RNA (rRNA) and site-specific 2'-O-methylation of substrate RNAs. Essential for the accumulation and stability of U4 snRNA, U6 snRNA, and box C/D snoRNAs. The chain is 13 kDa ribonucleoprotein-associated protein (SNU13) from Debaryomyces hansenii (strain ATCC 36239 / CBS 767 / BCRC 21394 / JCM 1990 / NBRC 0083 / IGC 2968) (Yeast).